The chain runs to 121 residues: Large ribosomal subunit protein uL18 (121 aa).

Belongs to the universal ribosomal protein uL18 family. As to quaternary structure, part of the 50S ribosomal subunit; part of the 5S rRNA/L5/L18/L25 subcomplex. Contacts the 5S and 23S rRNAs.

In terms of biological role, this is one of the proteins that bind and probably mediate the attachment of the 5S RNA into the large ribosomal subunit, where it forms part of the central protuberance. This Roseiflexus castenholzii (strain DSM 13941 / HLO8) protein is Large ribosomal subunit protein uL18.